Consider the following 126-residue polypeptide: MRRKPYELKVEVKAVYLREHSRPDAHQYTFAYTVTMENTGTVPAKLLGRRWIITDANGKTVEVVGEGVVGEHPYLRPGEAFEYTSAATIATPVGSMHGSYQLIADDGMPFEAPIAAFSLAIPRRLH.

The ApaG domain occupies 2–126 (RRKPYELKVE…FSLAIPRRLH (125 aa)).

The polypeptide is Protein ApaG (Methylococcus capsulatus (strain ATCC 33009 / NCIMB 11132 / Bath)).